The primary structure comprises 1293 residues: Putative DNA-directed RNA polymerase 008R (1293 aa).

Zn(2+)-binding residues include Cys-61, Cys-64, Cys-71, His-74, Cys-99, Cys-102, and Cys-123. A DNA-binding region spans residues 270–339 (TNRKPMAGIK…PVMVTPFNVS (70 aa)). The segment covering 354-376 (EMRDGTVHRPSEWRPSHGDHMET) has biased composition (basic and acidic residues). A disordered region spans residues 354–390 (EMRDGTVHRPSEWRPSHGDHMETADGSPLGRVTRPSY). Mg(2+) contacts are provided by Asp-474, Asp-476, and Asp-478. Positions 724 to 734 (GQQYVGGSRPG) are alpha-amanitin binding. The tract at residues 776 to 788 (PREVFFHAKSGRE) is bridging helix.

Belongs to the RNA polymerase beta' chain family.

It carries out the reaction RNA(n) + a ribonucleoside 5'-triphosphate = RNA(n+1) + diphosphate. Component of the DNA-dependent RNA polymerase that catalyzes the transcription of DNA into RNA using the four ribonucleoside triphosphates as substrates. Largest and catalytic component of RNA polymerase II which synthesizes mRNA precursors and many functional non-coding RNAs. Forms the polymerase active center together with the second largest subunit. The protein is Putative DNA-directed RNA polymerase 008R of Frog virus 3 (isolate Goorha) (FV-3).